The sequence spans 634 residues: Dynein axonemal assembly factor 1 (634 aa).

The interval Met1–Pro80 is disordered. Residues Ala22–Glu42 show a composition bias toward basic and acidic residues. Residues Cys48 to Asn62 show a composition bias toward polar residues. Residues His70–Pro80 show a composition bias toward basic and acidic residues. 6 LRR repeats span residues Ala101–Thr123, Gly124–Ser145, Glu146–Gln167, Lys168–Pro189, Val190–Arg211, and Arg215–Glu236. The 40-residue stretch at Asn249–Trp288 folds into the LRRCT domain. The span at Glu326–Glu336 shows a compositional bias: basic and acidic residues. The tract at residues Glu326–Met358 is disordered. Phosphoserine is present on Ser349. Thr462 is subject to Phosphothreonine. A phosphoserine mark is found at Ser465 and Ser488. Disordered regions lie at residues Ile481–Thr505 and Glu559–Asp634.

Belongs to the DNAAF1 family.

The protein resides in the cell projection. It is found in the cilium. Functionally, cilium-specific protein required for the stability of the ciliary architecture. Plays a role in cytoplasmic preassembly of dynein arms. Involved in regulation of microtubule-based cilia and actin-based brush border microvilli. The sequence is that of Dynein axonemal assembly factor 1 (Dnaaf1) from Mus musculus (Mouse).